The chain runs to 570 residues: Glycine--tRNA ligase (570 aa).

2 residues coordinate substrate: arginine 99 and glutamate 165. Residues 197 to 199, 207 to 212, 324 to 325, and 443 to 446 contribute to the ATP site; these read RNE, IRLREF, EC, and GIDR. 212–216 lines the substrate pocket; the sequence is FTQAE. Position 439-443 (439-443) interacts with substrate; the sequence is EPSFG.

The protein belongs to the class-II aminoacyl-tRNA synthetase family.

The protein resides in the cytoplasm. It catalyses the reaction tRNA(Gly) + glycine + ATP = glycyl-tRNA(Gly) + AMP + diphosphate. Catalyzes the attachment of glycine to tRNA(Gly). The polypeptide is Glycine--tRNA ligase (Pyrococcus horikoshii (strain ATCC 700860 / DSM 12428 / JCM 9974 / NBRC 100139 / OT-3)).